Here is a 158-residue protein sequence, read N- to C-terminus: MDHQLTREESQRLMHLLKLPMEQYGNFPLMRKAFLRACKIVHPDKGGSDELSQELISLYRRLEESLPCLSTQDFIETDKVCLIEKIDYLTDWINCNFENCNKCLYCRLWNNHKSDPPFPKVWGYCLCYKCYIIWFGLEPCHFAFQSWMQIIALTPFCA.

Methionine 1 is modified (N-acetylmethionine; by host). The region spanning 12-75 is the J domain; that stretch reads RLMHLLKLPM…LPCLSTQDFI (64 aa). A C4-type; atypical zinc finger spans residues 95-106; the sequence is CNFENCNKCLYC. The H1C3-type; atypical zinc finger occupies 112–130; it reads HKSDPPFPKVWGYCLCYKC.

As to quaternary structure, interacts with host PPP2R1A; the interaction inhibits PP2A activity.

It is found in the host cytoplasm. The protein localises to the host nucleus. In terms of biological role, promotes efficient viral genome replication by accelerating both G1 and S phase progression of the cell cycle. Inhibits host PP2A by binding to the A subunit, thereby displacing lower affinity regulatory B subunit. Inactivation of PP2A in turn results in the transactivation of cyclin A and cyclin D1 promoters. Late during the infection cycle, ST may induce dephosphorylation of host MTOR, leading to the inhibition of cap-dependent translation. May establish and maintain high levels of viral genomes during persistent infection in cell culture. In Mus musculus (Mouse), this protein is Small t antigen.